Reading from the N-terminus, the 305-residue chain is Protoheme IX farnesyltransferase 1 (305 aa).

Helical transmembrane passes span 22–42 (IKTGIIKSNLVPMFAGLTLAL), 53–73 (IPEILFAFIGSILIIGAAGAF), 94–114 (VTGDISPKTALWLGIFMTIFG), 115–135 (LVFLALTTYLAAILGFIGLFL), 154–174 (IGSVSGAMPPLIGWAAIYPDV), 179–199 (IIGLFIIMIIWQMPHFYAIAI), 230–250 (LVILIIISILLGSLSIGLMLV), and 283–303 (LFHMTILFSTVIIYSLVGIFF).

The protein belongs to the UbiA prenyltransferase family. Protoheme IX farnesyltransferase subfamily. In terms of assembly, interacts with CtaA.

Its subcellular location is the cell membrane. The enzyme catalyses heme b + (2E,6E)-farnesyl diphosphate + H2O = Fe(II)-heme o + diphosphate. It participates in porphyrin-containing compound metabolism; heme O biosynthesis; heme O from protoheme: step 1/1. Its function is as follows. Converts heme B (protoheme IX) to heme O by substitution of the vinyl group on carbon 2 of heme B porphyrin ring with a hydroxyethyl farnesyl side group. The polypeptide is Protoheme IX farnesyltransferase 1 (Bacillus cytotoxicus (strain DSM 22905 / CIP 110041 / 391-98 / NVH 391-98)).